The primary structure comprises 145 residues: 3-dehydroquinate dehydratase (145 aa).

Tyrosine 24 functions as the Proton acceptor in the catalytic mechanism. The substrate site is built by asparagine 75, histidine 81, and aspartate 88. Residue histidine 101 is the Proton donor of the active site. Substrate is bound by residues 102–103 and arginine 112; that span reads IS.

It belongs to the type-II 3-dehydroquinase family. As to quaternary structure, homododecamer.

The catalysed reaction is 3-dehydroquinate = 3-dehydroshikimate + H2O. It functions in the pathway metabolic intermediate biosynthesis; chorismate biosynthesis; chorismate from D-erythrose 4-phosphate and phosphoenolpyruvate: step 3/7. Its function is as follows. Catalyzes a trans-dehydration via an enolate intermediate. The protein is 3-dehydroquinate dehydratase of Rhizobium johnstonii (strain DSM 114642 / LMG 32736 / 3841) (Rhizobium leguminosarum bv. viciae).